A 363-amino-acid polypeptide reads, in one-letter code: Peptide chain release factor 2 (363 aa).

The residue at position 251 (Gln251) is an N5-methylglutamine.

It belongs to the prokaryotic/mitochondrial release factor family. Post-translationally, methylated by PrmC. Methylation increases the termination efficiency of RF2.

It is found in the cytoplasm. Its function is as follows. Peptide chain release factor 2 directs the termination of translation in response to the peptide chain termination codons UGA and UAA. The polypeptide is Peptide chain release factor 2 (Helicobacter pylori (strain G27)).